The chain runs to 344 residues: Fructose-1,6-bisphosphatase, cytosolic (344 aa).

The Mg(2+) site is built by E71, E100, D121, L123, and D124. Substrate contacts are provided by residues 124-127, N215, Y247, Y267, and K277; that span reads DGSS. Residue E283 participates in Mg(2+) binding.

It belongs to the FBPase class 1 family. The cofactor is Mg(2+).

It is found in the cytoplasm. The catalysed reaction is beta-D-fructose 1,6-bisphosphate + H2O = beta-D-fructose 6-phosphate + phosphate. This is Fructose-1,6-bisphosphatase, cytosolic from Oryza coarctata (Wild rice).